Here is a 646-residue protein sequence, read N- to C-terminus: bZIP transcription factor 39 (646 aa).

At 1–311 (MAEPALLDPT…KSKSKTKTKK (311 aa)) the chain is on the cytoplasmic side. The tract at residues 25 to 172 (HELPLAGGGG…GGTVCEEEED (148 aa)) is disordered. Residues 43 to 53 (LDGLEFDLPGD) show a composition bias toward low complexity. Residues 59 to 69 (FLLRSPERDDS) show a composition bias toward basic and acidic residues. The span at 71–98 (EGSAAGSGPTASPSSSPTTSASNSAVAN) shows a compositional bias: low complexity. Residues 103–113 (EVKHEESDEGR) are compositionally biased toward basic and acidic residues. A compositionally biased stretch (acidic residues) spans 159 to 172 (DSDEGGTVCEEEED). The bZIP domain maps to 172-232 (DERRAARLMR…AENATLRQQL (61 aa)). The tract at residues 174–205 (RRAARLMRNRESAQLSRQRKKRYVEELEEKVK) is basic motif. The segment at 211–218 (INDLNSRI) is leucine-zipper. The segment at 272-308 (LVPIPRLKPQQPVPSSKVVKKPESKKTVENKSKSKTK) is disordered. Low complexity predominate over residues 279 to 288 (KPQQPVPSSK). Basic and acidic residues predominate over residues 291–303 (KKPESKKTVENKS). A helical membrane pass occupies residues 312–332 (VASVSLLGLLLIMLVFGAFIP). The Lumenal segment spans residues 333–646 (GFNHNFGMCG…FKSSSPHLVN (314 aa)). Residues Asn-371, Asn-399, Asn-525, Asn-530, Asn-565, and Asn-571 are each glycosylated (N-linked (GlcNAc...) asparagine). The tract at residues 560–585 (TGKTANNTEPFNRTSESSSKLPDSKP) is disordered. A compositionally biased stretch (polar residues) spans 562–585 (KTANNTEPFNRTSESSSKLPDSKP).

Belongs to the bZIP family. Highly expressed in leaf blade, and at lower levels in roots, leaf sheaths, flowers and seeds.

The protein localises to the endoplasmic reticulum membrane. Its subcellular location is the nucleus. Transcription factor involved in endoplasmic reticulum (ER) stress response. Acts as a ER stress sensor and activates the transcription factor BZIP50 and the chaperone BIP1. This chain is bZIP transcription factor 39, found in Oryza sativa subsp. japonica (Rice).